Here is a 513-residue protein sequence, read N- to C-terminus: Flavonoid 3',5'-hydroxylase (513 aa).

Heme is bound at residue C446.

Belongs to the cytochrome P450 family. The cofactor is heme. In terms of tissue distribution, hypocotyl tissues.

It carries out the reaction a 3',5'-unsubstituted flavanone + 2 reduced [NADPH--hemoprotein reductase] + 2 O2 = a 3',5'-dihydroxyflavanone + 2 oxidized [NADPH--hemoprotein reductase] + 2 H2O + 2 H(+). It participates in pigment biosynthesis; anthocyanin biosynthesis. Its function is as follows. Catalyzes the 3'5'-hydroxylation of naringenin and eriodictyol to form 5,7,3,'4',5'-pentahydroxyflavanone and 3',5'-hydroxylation of dihydrokaempferol and dihydroquercetin to form dihydromyricetin. The chain is Flavonoid 3',5'-hydroxylase (CYP75A2) from Solanum melongena (Eggplant).